Consider the following 330-residue polypeptide: Glycerol-3-phosphate dehydrogenase [NAD(P)+] (330 aa).

NADPH-binding residues include Trp-13, Arg-33, and Lys-103. Sn-glycerol 3-phosphate-binding residues include Lys-103, Gly-131, and Thr-133. Ala-135 is an NADPH binding site. Positions 186, 239, 249, 250, and 251 each coordinate sn-glycerol 3-phosphate. Lys-186 acts as the Proton acceptor in catalysis. Arg-250 is an NADPH binding site. Val-274 and Glu-276 together coordinate NADPH.

The protein belongs to the NAD-dependent glycerol-3-phosphate dehydrogenase family.

The protein resides in the cytoplasm. It catalyses the reaction sn-glycerol 3-phosphate + NAD(+) = dihydroxyacetone phosphate + NADH + H(+). The catalysed reaction is sn-glycerol 3-phosphate + NADP(+) = dihydroxyacetone phosphate + NADPH + H(+). The protein operates within membrane lipid metabolism; glycerophospholipid metabolism. Catalyzes the reduction of the glycolytic intermediate dihydroxyacetone phosphate (DHAP) to sn-glycerol 3-phosphate (G3P), the key precursor for phospholipid synthesis. This chain is Glycerol-3-phosphate dehydrogenase [NAD(P)+], found in Erythrobacter litoralis (strain HTCC2594).